Consider the following 264-residue polypeptide: 3-methyl-2-oxobutanoate hydroxymethyltransferase (264 aa).

Residues D45 and D84 each coordinate Mg(2+). Residues 45–46 (DS), D84, and K112 contribute to the 3-methyl-2-oxobutanoate site. Position 114 (E114) interacts with Mg(2+). E181 serves as the catalytic Proton acceptor.

It belongs to the PanB family. Homodecamer; pentamer of dimers. It depends on Mg(2+) as a cofactor.

It localises to the cytoplasm. The catalysed reaction is 3-methyl-2-oxobutanoate + (6R)-5,10-methylene-5,6,7,8-tetrahydrofolate + H2O = 2-dehydropantoate + (6S)-5,6,7,8-tetrahydrofolate. Its pathway is cofactor biosynthesis; (R)-pantothenate biosynthesis; (R)-pantoate from 3-methyl-2-oxobutanoate: step 1/2. Its function is as follows. Catalyzes the reversible reaction in which hydroxymethyl group from 5,10-methylenetetrahydrofolate is transferred onto alpha-ketoisovalerate to form ketopantoate. This Colwellia psychrerythraea (strain 34H / ATCC BAA-681) (Vibrio psychroerythus) protein is 3-methyl-2-oxobutanoate hydroxymethyltransferase.